The following is a 176-amino-acid chain: Acireductone dioxygenase (176 aa).

Residues His-100, His-102, Glu-106, and His-145 each coordinate Fe(2+). Positions 100, 102, 106, and 145 each coordinate Ni(2+).

Belongs to the acireductone dioxygenase (ARD) family. In terms of assembly, monomer. Fe(2+) serves as cofactor. Ni(2+) is required as a cofactor.

The catalysed reaction is 1,2-dihydroxy-5-(methylsulfanyl)pent-1-en-3-one + O2 = 3-(methylsulfanyl)propanoate + CO + formate + 2 H(+). It carries out the reaction 1,2-dihydroxy-5-(methylsulfanyl)pent-1-en-3-one + O2 = 4-methylsulfanyl-2-oxobutanoate + formate + 2 H(+). It participates in amino-acid biosynthesis; L-methionine biosynthesis via salvage pathway; L-methionine from S-methyl-5-thio-alpha-D-ribose 1-phosphate: step 5/6. Its function is as follows. Catalyzes 2 different reactions between oxygen and the acireductone 1,2-dihydroxy-3-keto-5-methylthiopentene (DHK-MTPene) depending upon the metal bound in the active site. Fe-containing acireductone dioxygenase (Fe-ARD) produces formate and 2-keto-4-methylthiobutyrate (KMTB), the alpha-ketoacid precursor of methionine in the methionine recycle pathway. Ni-containing acireductone dioxygenase (Ni-ARD) produces methylthiopropionate, carbon monoxide and formate, and does not lie on the methionine recycle pathway. The polypeptide is Acireductone dioxygenase (Bacillus pumilus (strain SAFR-032)).